The primary structure comprises 91 residues: Acylphosphatase (91 aa).

The Acylphosphatase-like domain occupies 5–91 (CLHAYVGGRV…QGIAGFVVRR (87 aa)). Catalysis depends on residues arginine 20 and asparagine 38.

It belongs to the acylphosphatase family.

The enzyme catalyses an acyl phosphate + H2O = a carboxylate + phosphate + H(+). The protein is Acylphosphatase (acyP) of Pseudomonas aeruginosa (strain ATCC 15692 / DSM 22644 / CIP 104116 / JCM 14847 / LMG 12228 / 1C / PRS 101 / PAO1).